We begin with the raw amino-acid sequence, 177 residues long: Large ribosomal subunit protein uL6 (177 aa).

It belongs to the universal ribosomal protein uL6 family. In terms of assembly, part of the 50S ribosomal subunit.

In terms of biological role, this protein binds to the 23S rRNA, and is important in its secondary structure. It is located near the subunit interface in the base of the L7/L12 stalk, and near the tRNA binding site of the peptidyltransferase center. This chain is Large ribosomal subunit protein uL6, found in Rhizobium rhizogenes (strain K84 / ATCC BAA-868) (Agrobacterium radiobacter).